The following is a 74-amino-acid chain: Putative membrane protein insertion efficiency factor (74 aa).

The protein belongs to the UPF0161 family.

It localises to the cell inner membrane. Could be involved in insertion of integral membrane proteins into the membrane. In Syntrophus aciditrophicus (strain SB), this protein is Putative membrane protein insertion efficiency factor.